We begin with the raw amino-acid sequence, 702 residues long: Soluble guanylate cyclase gcy-31 (702 aa).

A heme-binding site is contributed by His104. Residues 368–406 are a coiled coil; it reads TQQSAELKLLLHQEAQKSRNMRENMNRLKKERRRTDKLL. Positions 435–564 constitute a Guanylate cyclase domain; that stretch reads TILFTDIVEF…ETVYVANKME (130 aa). Residues Asp440 and Asp484 each contribute to the Mg(2+) site. Residues 614-702 are disordered; sequence RHGPHRVPSP…QDLTPRKSIT (89 aa). The segment covering 633–643 has biased composition (acidic residues); it reads SQTEDDDDDEL. A compositionally biased stretch (polar residues) spans 683–695; the sequence is RNSNKTPRQSQDL.

It belongs to the adenylyl cyclase class-4/guanylyl cyclase family. Heterodimer; with other soluble guanylate cyclases. Heme is required as a cofactor. As to expression, expressed in a pair of bilaterally symmetric neurons in the head.

The protein resides in the cytoplasm. The catalysed reaction is GTP = 3',5'-cyclic GMP + diphosphate. With respect to regulation, may be regulated by molecular oxygen. Probably not activated by nitric oxide (NO). Synthesizes cyclic GMP (cGMP) from GTP. May play a role in embryogenesis. This Caenorhabditis elegans protein is Soluble guanylate cyclase gcy-31 (gcy-31).